A 187-amino-acid chain; its full sequence is Elongation factor P (187 aa).

Belongs to the elongation factor P family.

It is found in the cytoplasm. It functions in the pathway protein biosynthesis; polypeptide chain elongation. Involved in peptide bond synthesis. Stimulates efficient translation and peptide-bond synthesis on native or reconstituted 70S ribosomes in vitro. Probably functions indirectly by altering the affinity of the ribosome for aminoacyl-tRNA, thus increasing their reactivity as acceptors for peptidyl transferase. The chain is Elongation factor P from Helicobacter acinonychis (strain Sheeba).